The primary structure comprises 229 residues: Geodin cluster transcription factor (229 aa).

Residues 12-39 (CHACAASKVRCSKEKPTCSRCSKRGTTC) constitute a DNA-binding region (zn(2)-C6 fungal-type). 2 disordered regions span residues 50 to 100 (KQLN…PGTT) and 141 to 169 (TANS…RPPT). Composition is skewed to polar residues over residues 51–71 (QLNN…SLAT) and 153–164 (ITSSHNTSSNSP).

The protein resides in the nucleus. Transcription factor that regulates the expression of the gene cluster that mediates the biosynthesis of geodin, an intermediate in the biosynthesis of other natural products. In Aspergillus terreus (strain NIH 2624 / FGSC A1156), this protein is Geodin cluster transcription factor.